Consider the following 256-residue polypeptide: Type III pantothenate kinase (256 aa).

6-13 (DIGNSSIV) is an ATP binding site. Substrate-binding positions include tyrosine 101 and 108–111 (GADR). Aspartate 110 serves as the catalytic Proton acceptor. Position 130 (aspartate 130) interacts with K(+). Threonine 133 is a binding site for ATP. Position 185 (threonine 185) interacts with substrate.

It belongs to the type III pantothenate kinase family. In terms of assembly, homodimer. NH4(+) is required as a cofactor. It depends on K(+) as a cofactor.

The protein localises to the cytoplasm. It carries out the reaction (R)-pantothenate + ATP = (R)-4'-phosphopantothenate + ADP + H(+). The protein operates within cofactor biosynthesis; coenzyme A biosynthesis; CoA from (R)-pantothenate: step 1/5. Its function is as follows. Catalyzes the phosphorylation of pantothenate (Pan), the first step in CoA biosynthesis. In Shouchella clausii (strain KSM-K16) (Alkalihalobacillus clausii), this protein is Type III pantothenate kinase.